Reading from the N-terminus, the 114-residue chain is UPF0145 protein YG5714_0873 (114 aa).

The protein belongs to the UPF0145 family.

This is UPF0145 protein YG5714_0873 from Saccharolobus islandicus (strain Y.G.57.14 / Yellowstone #1) (Sulfolobus islandicus).